The chain runs to 94 residues: Selenoprotein K (94 aa).

The chain crosses the membrane as a helical span at residues 20 to 42 (LSLITDFFWGIAEFVVLFFKTLL). Residues 47 to 94 (KKGRGYRNSSDSRYDDGRGPPGNPPRRMGRISHLHGPSPPPMAGGUGR) form a disordered region. Position 92 (selenocysteine 92) is a non-standard amino acid, selenocysteine.

Belongs to the selenoprotein K family. As to quaternary structure, interacts with DERL1, DERL2, DERL3 and SELENOS. The SELENOK-SELENOS complex interacts with VCP. Interacts with ZDHHC6. Post-translationally, cleaved by CAPN2/m-calpain in resting macrophages but not in activated macrophages. Macrophage activation up-regulates expression of the calpain inhibitor CAST/calpastatin, resulting in inhibition of CAPN2 activity. In terms of processing, truncated SELENOK proteins produced by failed UGA/Sec decoding are ubiquitinated by the CRL2(KLHDC2) complex, which recognizes the diglycine (Gly-Gly) at the C-terminus of truncated SELENOK proteins.

The protein localises to the endoplasmic reticulum membrane. The protein resides in the cell membrane. Functionally, required for Ca(2+) flux in immune cells and plays a role in T-cell proliferation and in T-cell and neutrophil migration. Involved in endoplasmic reticulum-associated degradation (ERAD) of soluble glycosylated proteins. Required for palmitoylation and cell surface expression of CD36 and involved in macrophage uptake of low-density lipoprotein and in foam cell formation. Together with ZDHHC6, required for palmitoylation of ITPR1 in immune cells, leading to regulate ITPR1 stability and function. Plays a role in protection of cells from ER stress-induced apoptosis. Protects cells from oxidative stress when overexpressed in cardiomyocytes. This chain is Selenoprotein K, found in Chinchilla lanigera (Long-tailed chinchilla).